Consider the following 481-residue polypeptide: 3-isopropylmalate dehydratase large subunit (481 aa).

Residues Cys363, Cys423, and Cys426 each coordinate [4Fe-4S] cluster. A disordered region spans residues 437–463; that stretch reads GQRAASTSNRNFEGRQGRGGRTHLVSP.

The protein belongs to the aconitase/IPM isomerase family. LeuC type 1 subfamily. As to quaternary structure, heterodimer of LeuC and LeuD. [4Fe-4S] cluster serves as cofactor.

It carries out the reaction (2R,3S)-3-isopropylmalate = (2S)-2-isopropylmalate. Its pathway is amino-acid biosynthesis; L-leucine biosynthesis; L-leucine from 3-methyl-2-oxobutanoate: step 2/4. Its function is as follows. Catalyzes the isomerization between 2-isopropylmalate and 3-isopropylmalate, via the formation of 2-isopropylmaleate. The chain is 3-isopropylmalate dehydratase large subunit from Salinispora arenicola (strain CNS-205).